Consider the following 542-residue polypeptide: Ribulokinase 2 (542 aa).

The protein belongs to the ribulokinase family.

It catalyses the reaction D-ribulose + ATP = D-ribulose 5-phosphate + ADP + H(+). The enzyme catalyses L-ribulose + ATP = L-ribulose 5-phosphate + ADP + H(+). It functions in the pathway carbohydrate degradation; L-arabinose degradation via L-ribulose; D-xylulose 5-phosphate from L-arabinose (bacterial route): step 2/3. In Staphylococcus saprophyticus subsp. saprophyticus (strain ATCC 15305 / DSM 20229 / NCIMB 8711 / NCTC 7292 / S-41), this protein is Ribulokinase 2.